Here is a 331-residue protein sequence, read N- to C-terminus: Adenine deaminase (331 aa).

Zn(2+) is bound by residues histidine 17, histidine 19, and histidine 197. Glutamate 200 acts as the Proton donor in catalysis. Aspartate 278 contacts Zn(2+). Aspartate 279 is a substrate binding site.

Belongs to the metallo-dependent hydrolases superfamily. Adenosine and AMP deaminases family. Adenine deaminase type 2 subfamily. Zn(2+) serves as cofactor.

The catalysed reaction is adenine + H2O + H(+) = hypoxanthine + NH4(+). Catalyzes the hydrolytic deamination of adenine to hypoxanthine. Plays an important role in the purine salvage pathway and in nitrogen catabolism. In Wolinella succinogenes (strain ATCC 29543 / DSM 1740 / CCUG 13145 / JCM 31913 / LMG 7466 / NCTC 11488 / FDC 602W) (Vibrio succinogenes), this protein is Adenine deaminase.